The following is a 211-amino-acid chain: ATP phosphoribosyltransferase (211 aa).

It belongs to the ATP phosphoribosyltransferase family. Short subfamily. Heteromultimer composed of HisG and HisZ subunits.

The protein resides in the cytoplasm. It catalyses the reaction 1-(5-phospho-beta-D-ribosyl)-ATP + diphosphate = 5-phospho-alpha-D-ribose 1-diphosphate + ATP. The protein operates within amino-acid biosynthesis; L-histidine biosynthesis; L-histidine from 5-phospho-alpha-D-ribose 1-diphosphate: step 1/9. Its function is as follows. Catalyzes the condensation of ATP and 5-phosphoribose 1-diphosphate to form N'-(5'-phosphoribosyl)-ATP (PR-ATP). Has a crucial role in the pathway because the rate of histidine biosynthesis seems to be controlled primarily by regulation of HisG enzymatic activity. This is ATP phosphoribosyltransferase from Thermosynechococcus vestitus (strain NIES-2133 / IAM M-273 / BP-1).